A 611-amino-acid polypeptide reads, in one-letter code: Zinc metalloproteinase nas-31 (611 aa).

The first 17 residues, 1 to 17, serve as a signal peptide directing secretion; sequence MILQLLFYSLFTHLAVS. The propeptide occupies 18-158; sequence QIDVNQALNQ…TVSTASRARR (141 aa). Asparagine 53 and asparagine 67 each carry an N-linked (GlcNAc...) asparagine glycan. Positions 82 to 95 are enriched in polar residues; the sequence is NAGTNQENGATEQQ. Residues 82–103 form a disordered region; the sequence is NAGTNQENGATEQQKPLREKPR. The 196-residue stretch at 159 to 354 folds into the Peptidase M12A domain; the sequence is QAYRDRYYPS…SMMNEHYKCK (196 aa). Asparagine 200 is a glycosylation site (N-linked (GlcNAc...) asparagine). Cystine bridges form between cysteine 203–cysteine 353, cysteine 224–cysteine 243, cysteine 357–cysteine 376, cysteine 379–cysteine 390, cysteine 397–cysteine 428, cysteine 455–cysteine 476, cysteine 532–cysteine 564, cysteine 539–cysteine 557, and cysteine 548–cysteine 561. Histidine 251 provides a ligand contact to Zn(2+). Residue glutamate 252 is part of the active site. 2 residues coordinate Zn(2+): histidine 255 and histidine 261. The 57-residue stretch at 340-396 folds into the EGF-like domain; it reads GFYDISMMNEHYKCKELCPAASSAQCKNGGFPSPRNCAICICPSGYGGILCDQRPPG. The CUB domain occupies 397 to 516; it reads CGDSVTATTT…LEYRAVTPSV (120 aa). Asparagine 424 is a glycosylation site (N-linked (GlcNAc...) asparagine). The region spanning 532 to 564 is the ShKT domain; the sequence is CQDLHPNCDFYKFFGMCRSKKIRSNCKFTCHDC.

The cofactor is Zn(2+). Expressed in excretory cell and in amphid and phasmid sheath glia.

It is found in the secreted. In terms of biological role, metalloprotease. This is Zinc metalloproteinase nas-31 (nas-31) from Caenorhabditis elegans.